The following is a 219-amino-acid chain: Large ribosomal subunit protein bL25 (219 aa).

Residues 193–219 are disordered; it reads VSSTELEETPEVPASAVPTTDQGESAE. The span at 209 to 219 shows a compositional bias: polar residues; the sequence is VPTTDQGESAE.

This sequence belongs to the bacterial ribosomal protein bL25 family. CTC subfamily. In terms of assembly, part of the 50S ribosomal subunit; part of the 5S rRNA/L5/L18/L25 subcomplex. Contacts the 5S rRNA. Binds to the 5S rRNA independently of L5 and L18.

Its function is as follows. This is one of the proteins that binds to the 5S RNA in the ribosome where it forms part of the central protuberance. In Legionella pneumophila (strain Corby), this protein is Large ribosomal subunit protein bL25.